We begin with the raw amino-acid sequence, 313 residues long: Thiamine thiazole synthase (313 aa).

Substrate is bound by residues Ala-71, Glu-92–Ala-93, Gly-100, and Val-165. At Cys-199 the chain carries 2,3-didehydroalanine (Cys). Substrate contacts are provided by residues Asp-201, His-216, Met-268, and Arg-278 to Gly-280.

It belongs to the THI4 family. As to quaternary structure, homooctamer. Fe cation serves as cofactor. During the catalytic reaction, a sulfide is transferred from Cys-199 to a reaction intermediate, generating a dehydroalanine residue.

It is found in the cytoplasm. It localises to the nucleus. The catalysed reaction is [ADP-thiazole synthase]-L-cysteine + glycine + NAD(+) = [ADP-thiazole synthase]-dehydroalanine + ADP-5-ethyl-4-methylthiazole-2-carboxylate + nicotinamide + 3 H2O + 2 H(+). Functionally, involved in biosynthesis of the thiamine precursor thiazole. Catalyzes the conversion of NAD and glycine to adenosine diphosphate 5-(2-hydroxyethyl)-4-methylthiazole-2-carboxylic acid (ADT), an adenylated thiazole intermediate. The reaction includes an iron-dependent sulfide transfer from a conserved cysteine residue of the protein to a thiazole intermediate. The enzyme can only undergo a single turnover, which suggests it is a suicide enzyme. May have additional roles in adaptation to various stress conditions and in DNA damage tolerance. This chain is Thiamine thiazole synthase, found in Coprinopsis cinerea (strain Okayama-7 / 130 / ATCC MYA-4618 / FGSC 9003) (Inky cap fungus).